Consider the following 247-residue polypeptide: V-type proton ATPase subunit D (247 aa).

The protein belongs to the V-ATPase D subunit family. In terms of assembly, V-ATPase is a heteromultimeric enzyme made up of two complexes: the ATP-hydrolytic V1 complex and the proton translocation V0 complex. The V1 complex consists of three catalytic AB heterodimers that form a heterohexamer, three peripheral stalks each consisting of EG heterodimers, one central rotor including subunits D and F, and the regulatory subunits C and H. The proton translocation complex V0 consists of the proton transport subunit a, a ring of proteolipid subunits c9c'', rotary subunit d, subunits e and f, and the accessory subunits ATP6AP1/Ac45 and ATP6AP2/PRR. Interacts with SNX10. In terms of tissue distribution, expressed in brain (at protein level). Present in tissues active in secretion. Amounts elevated in brain, kidney and testis.

It localises to the membrane. Its subcellular location is the cytoplasmic vesicle. The protein localises to the clathrin-coated vesicle membrane. The protein resides in the cytoplasm. It is found in the cytoskeleton. It localises to the microtubule organizing center. Its subcellular location is the centrosome. The protein localises to the cell projection. The protein resides in the cilium. Its function is as follows. Subunit of the V1 complex of vacuolar(H+)-ATPase (V-ATPase), a multisubunit enzyme composed of a peripheral complex (V1) that hydrolyzes ATP and a membrane integral complex (V0) that translocates protons. V-ATPase is responsible for acidifying and maintaining the pH of intracellular compartments and in some cell types, is targeted to the plasma membrane, where it is responsible for acidifying the extracellular environment. May play a role in cilium biogenesis through regulation of the transport and the localization of proteins to the cilium. This Bos taurus (Bovine) protein is V-type proton ATPase subunit D (ATP6V1D).